The primary structure comprises 281 residues: 16S rRNA (guanine(1405)-N(7))-methyltransferase (281 aa).

S-adenosyl-L-methionine is bound by residues Tyr-60, 105 to 107 (HTS), Arg-111, Gly-136, Asp-160, 186 to 187 (QG), Phe-203, and Gln-212.

The protein belongs to the methyltransferase superfamily. Aminoglycoside resistance family.

It catalyses the reaction guanosine(1405) in 16S rRNA + S-adenosyl-L-methionine = N(7)-methylguanosine(1405) in 16S rRNA + S-adenosyl-L-homocysteine. Functionally, specifically methylates the N(7) position of guanine 1405 in 16S rRNA. Confers resistance to various aminoglycosides, including gentamicin and kanamycin. In Proteus mirabilis, this protein is 16S rRNA (guanine(1405)-N(7))-methyltransferase (rmtC).